The primary structure comprises 207 residues: Claudin-11 (207 aa).

A topological domain (cytoplasmic) is located at residue Met-1. Residues 2–22 form a helical membrane-spanning segment; it reads VATCLQVVGFVTSFVGWIGII. Topologically, residues 23 to 82 are extracellular; sequence VTTSTNDWVVTCSYTIPTCRKMDELGSKGLWADCVMATGLYHCKPLVDILILPGYVQACR. The chain crosses the membrane as a helical span at residues 83–103; the sequence is ALMIAASVLGLPAILLLLTVL. The Cytoplasmic segment spans residues 104–122; the sequence is PCIRMGHEPGVAKYRRAQL. Residues 123 to 143 form a helical membrane-spanning segment; sequence AGVLLILLALCAIVATIWFPV. The Extracellular portion of the chain corresponds to 144–157; sequence CAHREITIVSFGYS. The chain crosses the membrane as a helical span at residues 158-178; the sequence is LYAGWIGAVMCLVGGCVIVCC. The Cytoplasmic segment spans residues 179–207; it reads SGDAQSFGENRFYYSSGSSSPTHAKSAHV. Ser-193, Ser-194, Ser-197, and Ser-198 each carry phosphoserine.

This sequence belongs to the claudin family. As to quaternary structure, interacts with tetraspanin-3/TSPAN3. Interacts with OCLN.

The protein resides in the cell junction. It is found in the tight junction. It localises to the cell membrane. Its function is as follows. Plays a major role in tight junction-specific obliteration of the intercellular space, through calcium-independent cell-adhesion activity. The sequence is that of Claudin-11 (Cldn11) from Mus musculus (Mouse).